The chain runs to 257 residues: tRNA (guanine-N(1)-)-methyltransferase (257 aa).

Residues G113 and I133 to L138 contribute to the S-adenosyl-L-methionine site.

It belongs to the RNA methyltransferase TrmD family. In terms of assembly, homodimer.

The protein localises to the cytoplasm. The enzyme catalyses guanosine(37) in tRNA + S-adenosyl-L-methionine = N(1)-methylguanosine(37) in tRNA + S-adenosyl-L-homocysteine + H(+). Functionally, specifically methylates guanosine-37 in various tRNAs. The polypeptide is tRNA (guanine-N(1)-)-methyltransferase (Cronobacter sakazakii (strain ATCC BAA-894) (Enterobacter sakazakii)).